The chain runs to 591 residues: Probable anion transporter 4, chloroplastic (591 aa).

Positions 1–38 are disordered; it reads MAMGAVLSSRTFASPLSSSGKQHPPQNNKCTCSSPPTR. The N-terminal 76 residues, 1–76, are a transit peptide targeting the chloroplast; it reads MAMGAVLSSR…LSARFHQPVV (76 aa). The segment covering 8–36 has biased composition (polar residues); the sequence is SSRTFASPLSSSGKQHPPQNNKCTCSSPP. Transmembrane regions (helical) follow at residues 184-204, 220-240, 249-269, 271-291, 313-333, 336-356, 402-422, 440-460, 475-495, 531-551, and 565-585; these read VVLL…NMSI, VGLI…LGGI, VVLG…PLAA, IGLP…GVAM, LVYS…PLLI, FGWP…FALW, VWAL…LLTW, LLCV…GWIA, KIMQ…LSKV, AGVL…FGTA, and VFQV…VFST.

The protein belongs to the major facilitator superfamily. Sodium/anion cotransporter (TC 2.A.1.14) family.

It localises to the plastid. The protein localises to the chloroplast membrane. In terms of biological role, probable anion transporter. In Oryza sativa subsp. japonica (Rice), this protein is Probable anion transporter 4, chloroplastic (PHT4;4).